The primary structure comprises 491 residues: MSETKRVRVRYAPSPTGFLHIGNARTALFNYLFARHNDGDFIIRIEDTDAKRNIADGEESQMTNLKWLGMDWDEGVDVPGKYGPYRQSERQSIYEPLIQQLLDEGLAYKCYCTEEELDAEREKQKANGEMPRYSGKCRHLTKEQQAEKEAQGFKPSIRFKVPANETITFNDMVKDDVSFESNGIGDFVIAKKDGIPTYNFAVAVDDHLMEISHVLRGDDHISNTPKQILIYNAFGWEPPIFGHMTLIVNESRRKLSKRDGSIIQFIEQYRDLGYLPEALFNFIAMLGWSPEGEEEIFSKEEFIKMFDPKRLSKSPALFDNVKLTWVNNQYVKKLPLNDVVELSLPHLQKAGVVSAELDQAELDWVHKLVSLYHEQMSYGAEIVPLSEMFFADAESITFDEEETAVLAEETVPTVISAFKKELEALEVLEAAEVKAAIKRVQKETGVKGKGLFMPIRIVTTGEMHGPELPLAIEVLGREKVLNRLDTWLKNN.

A 'HIGH' region motif is present at residues 13–23 (PSPTGFLHIGN). The Zn(2+) site is built by Cys-110, Cys-112, Cys-137, and His-139. Residues 254-258 (KLSKR) carry the 'KMSKS' region motif. Residue Lys-257 coordinates ATP.

The protein belongs to the class-I aminoacyl-tRNA synthetase family. Glutamate--tRNA ligase type 1 subfamily. In terms of assembly, monomer. The cofactor is Zn(2+).

Its subcellular location is the cytoplasm. It carries out the reaction tRNA(Glu) + L-glutamate + ATP = L-glutamyl-tRNA(Glu) + AMP + diphosphate. In terms of biological role, catalyzes the attachment of glutamate to tRNA(Glu) in a two-step reaction: glutamate is first activated by ATP to form Glu-AMP and then transferred to the acceptor end of tRNA(Glu). The polypeptide is Glutamate--tRNA ligase (Listeria monocytogenes serotype 4b (strain F2365)).